A 643-amino-acid polypeptide reads, in one-letter code: MSKPSSSPFFSETTSRLQDETVFFSLFPDSSLSSAALQSLHLEIIDFVSPFTSPYIWQHEPFSLSIALSSSCACTNTAIPHLHGKLKYGDNLEDEWFAVFLLFRISAAFPSNSIRVWDTDGEFLLIEAAFHLPRWLNPETSLNRVFIRGGDLHIVPRSRLPDPSLVASLRFLIERGNESRASDSVQSALKNRISDYPERAWRNMHRVRVRVPVSVAQVIRHEPFLISLAVEGFYDRDMDSMKHAAKMEKFLSKGREEKLVLVLVKMSRAMYGQLVQQKFQAPNCYPMPSVSDRDAFSEAELGMKIACGMEMMYQQRKKEGEDGKGISWSKYKDNLEKYGYFEGLLSGSKEYKRLMENAEEYHQKSSSFSRTRDIMSAPVRRIDEILALPYSEDDFKGQEVPASDNDSWLYDGEDELNSVLQERQKEMEFYNSKKERKNKGKEKQEAGSSSDANMNNFDLGDISKSMQQFMHKVSSYKGAEVPENRDFKEVSIDVDRFMKDIESMLGSQGRDEQADDDSDGSEGSSMDMDFDDVEDDSEGEESNEDAKESFEESYYGAMNEELKNSTLEKSFENVNQQHSSKQNEESSKTRDEKDDEFTPVDADFNLVKNLLESYSSQQGLPGPASNLLGLMGLQLPKDSGDKN.

Disordered stretches follow at residues 428–458 (EFYN…NNFD) and 501–600 (IESM…FTPV). Positions 446–456 (AGSSSDANMNN) are enriched in polar residues. Over residues 528–543 (MDFDDVEDDSEGEESN) the composition is skewed to acidic residues. The segment covering 564–580 (NSTLEKSFENVNQQHSS) has biased composition (polar residues). Basic and acidic residues predominate over residues 581-592 (KQNEESSKTRDE).

It belongs to the ECD family.

The chain is Protein ecdysoneless homolog from Arabidopsis thaliana (Mouse-ear cress).